The sequence spans 706 residues: Glycine--tRNA ligase beta subunit (706 aa).

This sequence belongs to the class-II aminoacyl-tRNA synthetase family. In terms of assembly, tetramer of two alpha and two beta subunits.

It localises to the cytoplasm. The catalysed reaction is tRNA(Gly) + glycine + ATP = glycyl-tRNA(Gly) + AMP + diphosphate. The protein is Glycine--tRNA ligase beta subunit of Hyphomonas neptunium (strain ATCC 15444).